The chain runs to 241 residues: Biosynthetic peptidoglycan transglycosylase (241 aa).

The helical transmembrane segment at 18-38 (GVIGIIALWMAGILIFAFLPV) threads the bilayer.

This sequence belongs to the glycosyltransferase 51 family.

Its subcellular location is the cell inner membrane. The catalysed reaction is [GlcNAc-(1-&gt;4)-Mur2Ac(oyl-L-Ala-gamma-D-Glu-L-Lys-D-Ala-D-Ala)](n)-di-trans,octa-cis-undecaprenyl diphosphate + beta-D-GlcNAc-(1-&gt;4)-Mur2Ac(oyl-L-Ala-gamma-D-Glu-L-Lys-D-Ala-D-Ala)-di-trans,octa-cis-undecaprenyl diphosphate = [GlcNAc-(1-&gt;4)-Mur2Ac(oyl-L-Ala-gamma-D-Glu-L-Lys-D-Ala-D-Ala)](n+1)-di-trans,octa-cis-undecaprenyl diphosphate + di-trans,octa-cis-undecaprenyl diphosphate + H(+). It functions in the pathway cell wall biogenesis; peptidoglycan biosynthesis. Peptidoglycan polymerase that catalyzes glycan chain elongation from lipid-linked precursors. The protein is Biosynthetic peptidoglycan transglycosylase of Yersinia pseudotuberculosis serotype O:3 (strain YPIII).